The primary structure comprises 383 residues: Methenyltetrahydrofolate synthase domain-containing protein (383 aa).

The segment at 249–301 is disordered; it reads AGKDVTLQGEHQHLPEPGCQQTVPLSVGRRPPDTPGPETNSMEAAPGSPPGEG. Positions 306-379 constitute an RRM domain; the sequence is ADVYVGNLPG…DTLRVALARQ (74 aa).

The protein is Methenyltetrahydrofolate synthase domain-containing protein (MTHFSD) of Homo sapiens (Human).